A 448-amino-acid chain; its full sequence is Late embryogenesis abundant protein ECP63 (448 aa).

2 stretches are compositionally biased toward basic and acidic residues: residues Thr-282–Gly-326 and Gln-334–Ala-354. 2 disordered regions span residues Thr-282–Glu-360 and Ser-411–Leu-448. Residues Lys-297–Glu-331 adopt a coiled-coil conformation. A compositionally biased stretch (polar residues) spans Leu-420 to Asn-432. The span at Gly-435–Leu-448 shows a compositional bias: basic and acidic residues.

This sequence belongs to the LEA type 4 family. As to expression, expressed in mature seeds.

Functionally, may be involved in the BHLH109-mediated regulation of somatic embryogenesis. The chain is Late embryogenesis abundant protein ECP63 from Arabidopsis thaliana (Mouse-ear cress).